The primary structure comprises 305 residues: UDP-3-O-acyl-N-acetylglucosamine deacetylase (305 aa).

Zn(2+) contacts are provided by H79, H238, and D242. Catalysis depends on H265, which acts as the Proton donor.

It belongs to the LpxC family. Zn(2+) serves as cofactor.

The catalysed reaction is a UDP-3-O-[(3R)-3-hydroxyacyl]-N-acetyl-alpha-D-glucosamine + H2O = a UDP-3-O-[(3R)-3-hydroxyacyl]-alpha-D-glucosamine + acetate. Its pathway is glycolipid biosynthesis; lipid IV(A) biosynthesis; lipid IV(A) from (3R)-3-hydroxytetradecanoyl-[acyl-carrier-protein] and UDP-N-acetyl-alpha-D-glucosamine: step 2/6. In terms of biological role, catalyzes the hydrolysis of UDP-3-O-myristoyl-N-acetylglucosamine to form UDP-3-O-myristoylglucosamine and acetate, the committed step in lipid A biosynthesis. The chain is UDP-3-O-acyl-N-acetylglucosamine deacetylase from Klebsiella pneumoniae subsp. pneumoniae (strain ATCC 700721 / MGH 78578).